We begin with the raw amino-acid sequence, 500 residues long: Potassium/proton antiporter CemA (500 aa).

A helical transmembrane segment spans residues Leu129–Phe149. Residues His204–Asp354 form an insert region. Helical transmembrane passes span Ile378–Leu398, Ile425–Phe445, and Ile461–Phe481.

The protein belongs to the CemA family.

It localises to the plastid. The protein localises to the chloroplast inner membrane. The catalysed reaction is K(+)(in) + H(+)(out) = K(+)(out) + H(+)(in). Functionally, contributes to K(+)/H(+) antiport activity by supporting proton efflux to control proton extrusion and homeostasis in chloroplasts in a light-dependent manner to modulate photosynthesis. Prevents excessive induction of non-photochemical quenching (NPQ) under continuous-light conditions. Indirectly promotes efficient inorganic carbon uptake into chloroplasts. This chain is Potassium/proton antiporter CemA, found in Chlamydomonas reinhardtii (Chlamydomonas smithii).